We begin with the raw amino-acid sequence, 317 residues long: Ribosomal protein L11 methyltransferase (317 aa).

Residues T158, G179, D201, and N244 each contribute to the S-adenosyl-L-methionine site.

Belongs to the methyltransferase superfamily. PrmA family.

It localises to the cytoplasm. The catalysed reaction is L-lysyl-[protein] + 3 S-adenosyl-L-methionine = N(6),N(6),N(6)-trimethyl-L-lysyl-[protein] + 3 S-adenosyl-L-homocysteine + 3 H(+). Functionally, methylates ribosomal protein L11. This chain is Ribosomal protein L11 methyltransferase, found in Streptococcus pyogenes serotype M4 (strain MGAS10750).